Reading from the N-terminus, the 353-residue chain is Photosystem II protein D1 (353 aa).

Threonine 2 is modified (N-acetylthreonine). Threonine 2 is subject to Phosphothreonine. Helical transmembrane passes span 29-46 (YIGWFGVLMIPTLLTATS), 118-133 (HFLLGVACYMGREWEL), and 142-156 (WIAVAYSAPVAAATA). Histidine 118 lines the chlorophyll a pocket. Tyrosine 126 provides a ligand contact to pheophytin a. Positions 170 and 189 each coordinate [CaMn4O5] cluster. Residues 197–218 (FHMLGVAGVFGSSLFSAMHGSL) traverse the membrane as a helical segment. Histidine 198 serves as a coordination point for chlorophyll a. A quinone contacts are provided by residues histidine 215 and 264–265 (SF). Residue histidine 215 coordinates Fe cation. Histidine 272 serves as a coordination point for Fe cation. The chain crosses the membrane as a helical span at residues 274–288 (FLAAWPVVGIWFTAL). [CaMn4O5] cluster-binding residues include histidine 332, glutamate 333, aspartate 342, and alanine 344. Positions 345-353 (AMEAPSVNG) are excised as a propeptide.

It belongs to the reaction center PufL/M/PsbA/D family. PSII is composed of 1 copy each of membrane proteins PsbA, PsbB, PsbC, PsbD, PsbE, PsbF, PsbH, PsbI, PsbJ, PsbK, PsbL, PsbM, PsbT, PsbX, PsbY, PsbZ, Psb30/Ycf12, at least 3 peripheral proteins of the oxygen-evolving complex and a large number of cofactors. It forms dimeric complexes. The D1/D2 heterodimer binds P680, chlorophylls that are the primary electron donor of PSII, and subsequent electron acceptors. It shares a non-heme iron and each subunit binds pheophytin, quinone, additional chlorophylls, carotenoids and lipids. D1 provides most of the ligands for the Mn4-Ca-O5 cluster of the oxygen-evolving complex (OEC). There is also a Cl(-1) ion associated with D1 and D2, which is required for oxygen evolution. The PSII complex binds additional chlorophylls, carotenoids and specific lipids. is required as a cofactor. Tyr-161 forms a radical intermediate that is referred to as redox-active TyrZ, YZ or Y-Z. Post-translationally, C-terminally processed by CTPA; processing is essential to allow assembly of the oxygen-evolving complex and thus photosynthetic growth.

Its subcellular location is the plastid. The protein resides in the chloroplast thylakoid membrane. The enzyme catalyses 2 a plastoquinone + 4 hnu + 2 H2O = 2 a plastoquinol + O2. Functionally, photosystem II (PSII) is a light-driven water:plastoquinone oxidoreductase that uses light energy to abstract electrons from H(2)O, generating O(2) and a proton gradient subsequently used for ATP formation. It consists of a core antenna complex that captures photons, and an electron transfer chain that converts photonic excitation into a charge separation. The D1/D2 (PsbA/PsbD) reaction center heterodimer binds P680, the primary electron donor of PSII as well as several subsequent electron acceptors. This is Photosystem II protein D1 from Vigna unguiculata (Cowpea).